Reading from the N-terminus, the 171-residue chain is Ribosome maturation factor RimM (171 aa).

The PRC barrel domain maps to 97–170 (EGEYYYHEII…LVTIHVMEGL (74 aa)).

Belongs to the RimM family. In terms of assembly, binds ribosomal protein uS19.

Its subcellular location is the cytoplasm. Functionally, an accessory protein needed during the final step in the assembly of 30S ribosomal subunit, possibly for assembly of the head region. Essential for efficient processing of 16S rRNA. May be needed both before and after RbfA during the maturation of 16S rRNA. It has affinity for free ribosomal 30S subunits but not for 70S ribosomes. The sequence is that of Ribosome maturation factor RimM from Bacillus cereus (strain ATCC 14579 / DSM 31 / CCUG 7414 / JCM 2152 / NBRC 15305 / NCIMB 9373 / NCTC 2599 / NRRL B-3711).